The sequence spans 507 residues: DNA replication licensing factor MCM6 (507 aa).

The MCM domain maps to Leu-32–Val-239. The ATP site is built by His-45, Ser-85, Thr-86, Ala-87, Lys-88, Ser-89, and Asn-190. An Arginine finger motif is present at residues Ser-214 to Asp-217. Arg-305 and Glu-308 together coordinate ADP. Lys-329 carries the post-translational modification N6-acetyllysine. Positions Gly-365–Glu-392 are disordered. Phosphoserine is present on residues Ser-375, Ser-390, and Ser-448. Thr-477 is modified (phosphothreonine).

It belongs to the MCM family. Component of the MCM2-7 complex. The complex forms a toroidal hexameric ring with the proposed subunit order MCM2-MCM6-MCM4-MCM7-MCM3-MCM5. Component of the CMG helicase complex, a hexameric ring of related MCM2-7 subunits stabilized by CDC45 and the tetrameric GINS complex. May interact with MCM10. Interacts with TIPIN. Interacts with CDT1. Interacts with MCMBP. Interacts with DDI2. O-glycosylated (O-GlcNAcylated), in a cell cycle-dependent manner.

The protein localises to the nucleus. It localises to the chromosome. The catalysed reaction is ATP + H2O = ADP + phosphate + H(+). Functionally, acts as a component of the MCM2-7 complex (MCM complex) which is the replicative helicase essential for 'once per cell cycle' DNA replication initiation and elongation in eukaryotic cells. Core component of CDC45-MCM-GINS (CMG) helicase, the molecular machine that unwinds template DNA during replication, and around which the replisome is built. The active ATPase sites in the MCM2-7 ring are formed through the interaction surfaces of two neighboring subunits such that a critical structure of a conserved arginine finger motif is provided in trans relative to the ATP-binding site of the Walker A box of the adjacent subunit. The six ATPase active sites, however, are likely to contribute differentially to the complex helicase activity. This chain is DNA replication licensing factor MCM6 (Mcm6), found in Rattus norvegicus (Rat).